Reading from the N-terminus, the 491-residue chain is MSNKTLLIITDGIGHNSSNKNNAFYTAKKPTYDYLFENVPYSLIHTYGEYVGLPDMQMGNSEVGHMTIGSGRVLYQDLVKIHLAIKNDTLKDNEVLKNTISKSNNIHLLGLASDGGVHSHINHIIAMAKIAKNMGKKVFIHIITDGRDVAPNCAKTYINQILEICDEDIKIATISGRYYAMDRDNRWDRVKKAYDSITFANPKTQDDILSYIETSYKNEIFDEFIEPTSFEGYNGIEKNDGIIFCNFRSDRMREISSVFAKADFNEFDTFKGSLNFASMTQYDKNVFIPVLFPKDNPKNTLAEVISNAGLSQLHTAETEKYAHVTFFFNGGVEEPVLNESRVLIPSPQVATYDLKPEMSAPEVGSAVRTAMNNNIDFIVVNFANGDMVGHTGVFEAAVKAVEAVDFELGQIFELAKKQNYNIILTSDHGNCEMMKDDEGNILTNHTVGDVYCFVYSPKVKEVKTGSLNNIAPTVLKLMNLEIPKEMDEPLI.

The Mn(2+) site is built by D11 and S61. Residue S61 is the Phosphoserine intermediate of the active site. Residues H118, 147 to 148 (RD), R177, R183, 248 to 251 (RSDR), and K320 each bind substrate. Residues D386, H390, D427, H428, and H445 each contribute to the Mn(2+) site.

Belongs to the BPG-independent phosphoglycerate mutase family. As to quaternary structure, monomer. The cofactor is Mn(2+).

It carries out the reaction (2R)-2-phosphoglycerate = (2R)-3-phosphoglycerate. Its pathway is carbohydrate degradation; glycolysis; pyruvate from D-glyceraldehyde 3-phosphate: step 3/5. Catalyzes the interconversion of 2-phosphoglycerate and 3-phosphoglycerate. The sequence is that of 2,3-bisphosphoglycerate-independent phosphoglycerate mutase from Aliarcobacter butzleri (strain RM4018) (Arcobacter butzleri).